Consider the following 285-residue polypeptide: Flagellar filament 30.7 kDa core protein (285 aa).

The protein belongs to the bacterial flagellin family. As to quaternary structure, the core of the flagellum consists of several antigenically related polypeptides. Post-translationally, glycosylated. Glycosylation is not essential for motility.

It localises to the periplasmic flagellum. The protein resides in the periplasm. In terms of biological role, component of the core of the flagella. The sequence is that of Flagellar filament 30.7 kDa core protein (flaB3) from Treponema maltophilum.